The chain runs to 254 residues: Guanylate kinase (254 aa).

Residues Lys64 to Met243 form the Guanylate kinase-like domain. Position 71-78 (Gly71–Gly78) interacts with ATP.

It belongs to the guanylate kinase family.

Its subcellular location is the cytoplasm. It carries out the reaction GMP + ATP = GDP + ADP. Essential for recycling GMP and indirectly, cGMP. The protein is Guanylate kinase of Leifsonia xyli subsp. xyli (strain CTCB07).